The primary structure comprises 111 residues: uncharacterized protein (111 aa).

The helical transmembrane segment at 64–86 (VLCWLVLPLYCCNLLNLFFNIFL) threads the bilayer.

It is found in the membrane. This is an uncharacterized protein from Saccharomyces cerevisiae (strain ATCC 204508 / S288c) (Baker's yeast).